Consider the following 257-residue polypeptide: Beta-fibrinogenase mucrofibrase-4 (257 aa).

A signal peptide spans M1 to A18. A propeptide spanning residues Q19–L24 is cleaved from the precursor. The 224-residue stretch at V25 to A248 folds into the Peptidase S1 domain. 6 disulfide bridges follow: C31/C162, C49/C65, C97/C255, C141/C209, C173/C188, and C199/C224. Residues H64 and D109 each act as charge relay system in the active site. S203 serves as the catalytic Charge relay system.

It belongs to the peptidase S1 family. Snake venom subfamily. In terms of assembly, monomer. Expressed by the venom gland.

Its subcellular location is the secreted. In terms of biological role, snake venom serine protease with fibrinogenolytic activities. Cleaves beta-chain of fibrinogen (FGB) efficiently and shows relatively lower activity on alpha-chain. This is Beta-fibrinogenase mucrofibrase-4 from Protobothrops mucrosquamatus (Taiwan habu).